The chain runs to 238 residues: Ribosomal RNA large subunit methyltransferase E (238 aa).

S-adenosyl-L-methionine-binding residues include glycine 85, tryptophan 87, aspartate 113, aspartate 129, and aspartate 153. Catalysis depends on lysine 193, which acts as the Proton acceptor.

The protein belongs to the class I-like SAM-binding methyltransferase superfamily. RNA methyltransferase RlmE family.

Its subcellular location is the cytoplasm. It catalyses the reaction uridine(2552) in 23S rRNA + S-adenosyl-L-methionine = 2'-O-methyluridine(2552) in 23S rRNA + S-adenosyl-L-homocysteine + H(+). Functionally, specifically methylates the uridine in position 2552 of 23S rRNA at the 2'-O position of the ribose in the fully assembled 50S ribosomal subunit. The sequence is that of Ribosomal RNA large subunit methyltransferase E from Ruegeria sp. (strain TM1040) (Silicibacter sp.).